We begin with the raw amino-acid sequence, 123 residues long: Glycine cleavage system H protein (123 aa).

The 82-residue stretch at 23–104 (HWLAGITDHA…PYDAWIFSFE (82 aa)) folds into the Lipoyl-binding domain. N6-lipoyllysine is present on K64.

The protein belongs to the GcvH family. The glycine cleavage system is composed of four proteins: P, T, L and H. Requires (R)-lipoate as cofactor.

Its function is as follows. The glycine cleavage system catalyzes the degradation of glycine. The H protein shuttles the methylamine group of glycine from the P protein to the T protein. In Methylobacillus flagellatus (strain ATCC 51484 / DSM 6875 / VKM B-1610 / KT), this protein is Glycine cleavage system H protein.